Reading from the N-terminus, the 261-residue chain is Indole-3-glycerol phosphate synthase (261 aa).

It belongs to the TrpC family.

It carries out the reaction 1-(2-carboxyphenylamino)-1-deoxy-D-ribulose 5-phosphate + H(+) = (1S,2R)-1-C-(indol-3-yl)glycerol 3-phosphate + CO2 + H2O. Its pathway is amino-acid biosynthesis; L-tryptophan biosynthesis; L-tryptophan from chorismate: step 4/5. The sequence is that of Indole-3-glycerol phosphate synthase from Campylobacter hominis (strain ATCC BAA-381 / DSM 21671 / CCUG 45161 / LMG 19568 / NCTC 13146 / CH001A).